A 142-amino-acid chain; its full sequence is Large ribosomal subunit protein uL13 (142 aa).

This sequence belongs to the universal ribosomal protein uL13 family. In terms of assembly, part of the 50S ribosomal subunit.

This protein is one of the early assembly proteins of the 50S ribosomal subunit, although it is not seen to bind rRNA by itself. It is important during the early stages of 50S assembly. The protein is Large ribosomal subunit protein uL13 of Pseudomonas entomophila (strain L48).